The primary structure comprises 626 residues: Myelin-associated glycoprotein (626 aa).

Positions 1–19 (MIFLTALPLFWIMISASRG) are cleaved as a signal peptide. Residues 20-325 (GHWGAWMPSS…RTVGLSVMYA (306 aa)) form an interaction with RTN4R and RTN4RL2 region. Residues 20 to 516 (GHWGAWMPSS…HRLMWAKIGP (497 aa)) lie on the Extracellular side of the membrane. Residues 22 to 120 (WGAWMPSSIS…LGGKYYFRGD (99 aa)) enclose the Ig-like V-type domain. 3 cysteine pairs are disulfide-bonded: cysteine 37-cysteine 165, cysteine 42-cysteine 100, and cysteine 159-cysteine 217. An a ganglioside GT1b (d18:1(4E))-binding site is contributed by 65–67 (YPK). N-linked (GlcNAc...) asparagine glycosylation is present at asparagine 99. Asparagine 106 carries an N-linked (GlcNAc...) asparagine; partial glycan. Residues arginine 118 and 124–128 (YNQYT) each bind a ganglioside GT1b (d18:1(4E)). Ig-like C2-type domains lie at 139–237 (NTPN…MDVK), 241–325 (VIVE…VMYA), 327–412 (WKPT…VEFA), and 413–508 (PVLL…GAHR). Residues asparagine 223 and asparagine 246 are each glycosylated (N-linked (GlcNAc...) asparagine). Cysteine 261 and cysteine 305 are disulfide-bonded. N-linked (GlcNAc...) asparagine glycosylation is present at asparagine 315. Cysteine 347 and cysteine 392 are oxidised to a cystine. Asparagine 406 is a glycosylation site (N-linked (GlcNAc...) asparagine). 2 cysteine pairs are disulfide-bonded: cysteine 421–cysteine 430 and cysteine 432–cysteine 488. N-linked (GlcNAc...) asparagine glycans are attached at residues asparagine 450 and asparagine 454. The chain crosses the membrane as a helical span at residues 517–536 (VGAVVAFAILIAIVCYITQT). The S-palmitoyl cysteine moiety is linked to residue cysteine 531. Residues 537–626 (RRKKNVTESP…LAEYAEIRVK (90 aa)) are Cytoplasmic-facing. 3 positions are modified to phosphoserine: serine 545, serine 547, and serine 549. The tract at residues 577–626 (LGSERRLLGLRGEPPELDLSYSHSDLGKRPTKDSYTLTEELAEYAEIRVK) is required for normal axon myelination in the central nervous system. The interval 582–608 (RLLGLRGEPPELDLSYSHSDLGKRPTK) is disordered.

Belongs to the immunoglobulin superfamily. SIGLEC (sialic acid binding Ig-like lectin) family. Monomer and homodimer. Interacts (via the first three N-terminal Ig-like domains) with RTN4R and RTN4RL2. Interacts with RTN4R. Interacts with isoform 2 of BSG. N-glycosylated. Post-translationally, phosphorylated on tyrosine residues. In terms of processing, ubiquitinated, leading to proteasomal degradation. As to expression, both isoform 1 and isoform 2 are detected in myelinated structures in the central and peripheral nervous system, in periaxonal myelin and at Schmidt-Lanterman incisures. Detected in optic nerve, in oligodendroglia and in periaxonal myelin sheaths. Detected in compact myelin (at protein level). Both isoform 1 and isoform 2 are detected in the central and peripheral nervous system.

Its subcellular location is the cell membrane. It is found in the membrane raft. Adhesion molecule that mediates interactions between myelinating cells and neurons by binding to neuronal sialic acid-containing gangliosides and to the glycoproteins RTN4R and RTN4RL2. Not required for initial myelination, but seems to play a role in the maintenance of normal axon myelination. Protects motoneurons against apoptosis, also after injury; protection against apoptosis is probably mediated via interaction with neuronal RTN4R and RTN4RL2. Required to prevent degeneration of myelinated axons in adults; this probably depends on binding to gangliosides on the axon cell membrane. Negative regulator of neurite outgrowth; in dorsal root ganglion neurons the inhibition is mediated primarily via binding to neuronal RTN4R or RTN4RL2 and to a lesser degree via binding to neuronal gangliosides. In cerebellar granule cells the inhibition is mediated primarily via binding to neuronal gangliosides. In sensory neurons, inhibition of neurite extension depends only partially on RTN4R, RTN4RL2 and gangliosides. Inhibits axon longitudinal growth. Inhibits axon outgrowth by binding to RTN4R. Preferentially binds to alpha-2,3-linked sialic acid. Binds ganglioside Gt1b. The polypeptide is Myelin-associated glycoprotein (MAG) (Homo sapiens (Human)).